We begin with the raw amino-acid sequence, 2241 residues long: Little elongation complex subunit 1 (2241 aa).

Residues 22-185 adopt a coiled-coil conformation; the sequence is CASLQQNLNE…KQKNEKELRH (164 aa). Composition is skewed to basic and acidic residues over residues 222 to 233 and 296 to 315; these read GEGGRRIPEKPA and AFCEERHSEVSGQRPDDGNR. 3 disordered regions span residues 222 to 255, 273 to 315, and 368 to 387; these read GEGGRRIPEKPAKGSSAARASEQDELLPVQGGPA, GDFS…DGNR, and GEFTDSSDSDSVPPRDSMES. Ser-523 carries the post-translational modification Phosphoserine. A disordered region spans residues 552-590; it reads EFSKRTLTDGSASKSPCVTGSGRFQRRERDVRESTPQSG. The span at 559-569 shows a compositional bias: polar residues; it reads TDGSASKSPCV. Residue Ser-676 is modified to Phosphoserine. The disordered stretch occupies residues 703-817; sequence TAKGHSLPQS…PSGESTIPPE (115 aa). A compositionally biased stretch (gly residues) spans 718–728; that stretch reads TGGGQCKGRGP. Polar residues predominate over residues 738–760; sequence DWTSLARSQAGFTRRSSGSADST. The residue at position 803 (Thr-803) is a Phosphothreonine. Ser-896 carries the phosphoserine modification. The disordered stretch occupies residues 971 to 1119; it reads SGVTSGVFPA…VGEAGHPSDV (149 aa). Residues 1065–1074 show a composition bias toward acidic residues; sequence EEDTEVEDEA. The segment covering 1091–1104 has biased composition (basic and acidic residues); the sequence is RQQEQAEDSHRPLG. Lys-1189 is subject to N6-acetyllysine. Disordered stretches follow at residues 1231–1328, 1419–1475, and 1543–1671; these read SDVL…CLSI, ASSQ…KSRL, and VHLN…AAAS. A compositionally biased stretch (basic and acidic residues) spans 1252-1266; the sequence is DTEHALLESTHHSQA. Positions 1460–1470 are enriched in polar residues; sequence DISSNGQSANF. Phosphoserine is present on residues Ser-1553 and Ser-1582. Residues 1574–1585 are compositionally biased toward polar residues; sequence DRSTPTNCSPDT. Pro residues predominate over residues 1595–1606; that stretch reads PPLPPLLPPLIA. Thr-1607 bears the Phosphothreonine mark. Phosphoserine is present on residues Ser-1657, Ser-1662, Ser-1664, Ser-1666, and Ser-1677. 2 disordered regions span residues 1777–1800 and 1812–1843; these read GSSGADGSQGKSQDSGVQQDAGGK and KRLRLDNKSPEPDTREVTGEGVPEDPQGGSPL. The span at 1781-1794 shows a compositional bias: polar residues; that stretch reads ADGSQGKSQDSGVQ. A compositionally biased stretch (basic and acidic residues) spans 1814–1829; it reads LRLDNKSPEPDTREVT. Ser-1820 carries the phosphoserine modification.

The protein belongs to the ICE1 family. Component of the little elongation complex (LEC), at least composed of ELL (ELL, ELL2 or ELL3), ZC3H8, ICE1 and ICE2. Interacts (via N-terminus domain) with ELL. Interacts (via C-terminus domain) with ICE2 and ZC3H8.

The protein resides in the nucleus. The protein localises to the cajal body. Its function is as follows. Component of the little elongation complex (LEC), a complex required to regulate small nuclear RNA (snRNA) gene transcription by RNA polymerase II and III. Specifically acts as a scaffold protein that promotes the LEC complex formation and recruitment and RNA polymerase II occupancy at snRNA genes in subnuclear bodies. This chain is Little elongation complex subunit 1 (Ice1), found in Mus musculus (Mouse).